The following is a 216-amino-acid chain: Probable nicotinate-nucleotide adenylyltransferase (216 aa).

Belongs to the NadD family.

It carries out the reaction nicotinate beta-D-ribonucleotide + ATP + H(+) = deamido-NAD(+) + diphosphate. Its pathway is cofactor biosynthesis; NAD(+) biosynthesis; deamido-NAD(+) from nicotinate D-ribonucleotide: step 1/1. In terms of biological role, catalyzes the reversible adenylation of nicotinate mononucleotide (NaMN) to nicotinic acid adenine dinucleotide (NaAD). The protein is Probable nicotinate-nucleotide adenylyltransferase of Geobacillus thermodenitrificans (strain NG80-2).